A 291-amino-acid chain; its full sequence is Porphobilinogen deaminase (291 aa).

S-(dipyrrolylmethanemethyl)cysteine is present on Cys233.

It belongs to the HMBS family. Monomer. The cofactor is dipyrromethane.

It carries out the reaction 4 porphobilinogen + H2O = hydroxymethylbilane + 4 NH4(+). It participates in porphyrin-containing compound metabolism; protoporphyrin-IX biosynthesis; coproporphyrinogen-III from 5-aminolevulinate: step 2/4. Its function is as follows. Tetrapolymerization of the monopyrrole PBG into the hydroxymethylbilane pre-uroporphyrinogen in several discrete steps. This chain is Porphobilinogen deaminase (hemC), found in Ruminiclostridium josui (Clostridium josui).